Here is a 151-residue protein sequence, read N- to C-terminus: Zinc finger HIT domain-containing protein 3 (151 aa).

Residues Cys11, Cys14, Cys22, Cys25, Cys30, Cys34, His38, and Cys42 each coordinate Zn(2+). The HIT-type zinc finger occupies Cys11 to Cys42. The segment covering Ser43–Arg53 has biased composition (basic and acidic residues). The disordered stretch occupies residues Ser43–Asp81. The span at Ser63–Asp81 shows a compositional bias: acidic residues. Position 76 is a phosphoserine (Ser76).

As to quaternary structure, thyroid receptor interacting proteins (TRIPs) specifically interact with the ligand binding domain of the thyroid receptor (TR). Requires the presence of thyroid hormone for its interaction. Interacts with NUFIP1. Interacts (via HIT-type zinc finger) with the RUVBL1/RUVBL2 complex in the presence of ADP. In terms of tissue distribution, expressed in the cerebellum.

The protein resides in the cytoplasm. Its subcellular location is the nucleus. In Mus musculus (Mouse), this protein is Zinc finger HIT domain-containing protein 3 (Znhit3).